Reading from the N-terminus, the 275-residue chain is Dermonecrotic toxin LspiSicTox-betaIE4i (275 aa).

Positions 24 and 26 each coordinate Mg(2+). H40 serves as the catalytic Nucleophile. Intrachain disulfides connect C44/C50 and C46/C188. Residue D84 participates in Mg(2+) binding.

It belongs to the arthropod phospholipase D family. Class II subfamily. Mg(2+) is required as a cofactor. In terms of tissue distribution, expressed by the venom gland.

The protein resides in the secreted. It catalyses the reaction an N-(acyl)-sphingosylphosphocholine = an N-(acyl)-sphingosyl-1,3-cyclic phosphate + choline. The enzyme catalyses an N-(acyl)-sphingosylphosphoethanolamine = an N-(acyl)-sphingosyl-1,3-cyclic phosphate + ethanolamine. The catalysed reaction is a 1-acyl-sn-glycero-3-phosphocholine = a 1-acyl-sn-glycero-2,3-cyclic phosphate + choline. It carries out the reaction a 1-acyl-sn-glycero-3-phosphoethanolamine = a 1-acyl-sn-glycero-2,3-cyclic phosphate + ethanolamine. Functionally, dermonecrotic toxins cleave the phosphodiester linkage between the phosphate and headgroup of certain phospholipids (sphingolipid and lysolipid substrates), forming an alcohol (often choline) and a cyclic phosphate. This toxin acts on sphingomyelin (SM). It may also act on ceramide phosphoethanolamine (CPE), lysophosphatidylcholine (LPC) and lysophosphatidylethanolamine (LPE), but not on lysophosphatidylserine (LPS), and lysophosphatidylglycerol (LPG). It acts by transphosphatidylation, releasing exclusively cyclic phosphate products as second products. Induces dermonecrosis, hemolysis, increased vascular permeability, edema, inflammatory response, and platelet aggregation. This chain is Dermonecrotic toxin LspiSicTox-betaIE4i, found in Loxosceles spinulosa (Recluse spider).